A 91-amino-acid polypeptide reads, in one-letter code: Gas vesicle protein K (91 aa).

It belongs to the gas vesicle GvpK family.

It localises to the gas vesicle. Its function is as follows. Might be involved in nucleating gas vesicle formation. Gas vesicles are hollow, gas filled proteinaceous nanostructures found in some microorganisms. It is not clear what function gas vesicles perform in soil bacteria. This is Gas vesicle protein K from Streptomyces sp. (strain CB03234).